The primary structure comprises 205 residues: Proteasome subunit beta type-3 (205 aa).

The protein belongs to the peptidase T1B family. The 26S proteasome consists of a 20S proteasome core and two 19S regulatory subunits. The 20S proteasome core is composed of 28 subunits that are arranged in four stacked rings, resulting in a barrel-shaped structure. The two end rings are each formed by seven alpha subunits, and the two central rings are each formed by seven beta subunits. The catalytic chamber with the active sites is on the inside of the barrel.

The protein localises to the cytoplasm. It is found in the nucleus. Functionally, non-catalytic component of the proteasome, a multicatalytic proteinase complex which is characterized by its ability to cleave peptides with Arg, Phe, Tyr, Leu, and Glu adjacent to the leaving group at neutral or slightly basic pH. The proteasome has an ATP-dependent proteolytic activity. The polypeptide is Proteasome subunit beta type-3 (psmB3) (Dictyostelium discoideum (Social amoeba)).